The chain runs to 1196 residues: Chromosome partition protein Smc (1196 aa).

32–39 (PNGSGKSN) serves as a coordination point for ATP. 2 coiled-coil regions span residues 168-288 (LKHR…SVQQ) and 327-497 (DALE…LERK). The SMC hinge domain maps to 510–621 (AGILGPMAKL…VDDLDRALAL (112 aa)). 2 coiled-coil regions span residues 654 to 829 (LEVT…RAQQ) and 972 to 1026 (DRPT…KDLL).

Belongs to the SMC family. As to quaternary structure, homodimer.

The protein localises to the cytoplasm. Required for chromosome condensation and partitioning. The polypeptide is Chromosome partition protein Smc (Mycolicibacterium paratuberculosis (strain ATCC BAA-968 / K-10) (Mycobacterium paratuberculosis)).